The sequence spans 509 residues: Probable aspartic-type endopeptidase CTSD (509 aa).

Residues 1 to 21 form the signal peptide; that stretch reads MQFLWLCLLSAVTLQFTGTLA. One can recognise a Peptidase A1 domain in the interval 102-408; that stretch reads YFSEVKVGSE…DFDKNRVGLA (307 aa). Aspartate 120 is an active-site residue. Asparagine 174 is a glycosylation site (N-linked (GlcNAc...) asparagine). Aspartate 302 is an active-site residue. The N-linked (GlcNAc...) asparagine glycan is linked to asparagine 361. Positions 451 to 489 are disordered; sequence NKAPSGGSPGLPAESGSDSTTNGEATNGATSSPNSSSSV. Over residues 466–480 the composition is skewed to polar residues; that stretch reads GSDSTTNGEATNGAT. N-linked (GlcNAc...) asparagine glycosylation is present at asparagine 484. Serine 485 carries GPI-anchor amidated serine lipidation. The propeptide at 486 to 509 is removed in mature form; that stretch reads SSSVLTPTWLTLAVFFAIGSSLWS.

The protein belongs to the peptidase A1 family.

The protein resides in the cell membrane. Probable GPI-anchored aspartic-type endopeptidase which contributes to virulence. This chain is Probable aspartic-type endopeptidase CTSD (CTSD), found in Trichophyton verrucosum (strain HKI 0517).